A 259-amino-acid polypeptide reads, in one-letter code: Hydroxyethylthiazole kinase (259 aa).

Met-37 lines the substrate pocket. Positions 113 and 158 each coordinate ATP. Gly-185 contributes to the substrate binding site.

Belongs to the Thz kinase family. Mg(2+) serves as cofactor.

The catalysed reaction is 5-(2-hydroxyethyl)-4-methylthiazole + ATP = 4-methyl-5-(2-phosphooxyethyl)-thiazole + ADP + H(+). It participates in cofactor biosynthesis; thiamine diphosphate biosynthesis; 4-methyl-5-(2-phosphoethyl)-thiazole from 5-(2-hydroxyethyl)-4-methylthiazole: step 1/1. Catalyzes the phosphorylation of the hydroxyl group of 4-methyl-5-beta-hydroxyethylthiazole (THZ). The polypeptide is Hydroxyethylthiazole kinase (Helicobacter pylori (strain Shi470)).